A 447-amino-acid polypeptide reads, in one-letter code: MSTMTPAEIVSELDKHIIGQAKAKKAVAVALRNRWRRQQVGEPLRQEITPKNILMIGPTGVGKTEIARRLAKLADAPFVKIEATKFTEVGYVGRDVDSIVRDLIEISVKQTREAEMRKVRTKATDQAEDRILDVLLPQPRAVGFGGNADHANDDNNATRQTFRKRLREGQLDDKEVELDLEQPSAGMDIMAPPGMEEMTEQIRSMFSNLGSGKKQRRKVKIKEALKLLTDEEAAKMLNDEEVKTKAVQNVEQNGIVFLDEIDKITSRNNEGSGGEVSRQGVQRDLLPLVEGTTVNTKYGMVKTDHILFIASGAFHLAKPSDLIPELQGRFPIRVELDSLSVEDFEAILDATDASLVKQYQALLATEDVQLEFAADGIRRLAEIAYAVNEKTENIGARRLYTVIEKLLEEVSFSAGNHAGERVTIDAKYVEHALGEVSQDEDLSRYVL.

Residues I18, 60–65 (GVGKTE), D259, E325, and R397 each bind ATP.

Belongs to the ClpX chaperone family. HslU subfamily. A double ring-shaped homohexamer of HslV is capped on each side by a ring-shaped HslU homohexamer. The assembly of the HslU/HslV complex is dependent on binding of ATP.

Its subcellular location is the cytoplasm. ATPase subunit of a proteasome-like degradation complex; this subunit has chaperone activity. The binding of ATP and its subsequent hydrolysis by HslU are essential for unfolding of protein substrates subsequently hydrolyzed by HslV. HslU recognizes the N-terminal part of its protein substrates and unfolds these before they are guided to HslV for hydrolysis. This is ATP-dependent protease ATPase subunit HslU from Burkholderia ambifaria (strain ATCC BAA-244 / DSM 16087 / CCUG 44356 / LMG 19182 / AMMD) (Burkholderia cepacia (strain AMMD)).